The following is a 496-amino-acid chain: Genome polyprotein (496 aa).

Over Ser-1–Ser-447 the chain is Extracellular. 6 disulfide bridges follow: Cys-3–Cys-30, Cys-60–Cys-116, Cys-60–Cys-121, Cys-74–Cys-105, Cys-92–Cys-116, and Cys-92–Cys-121. The interval Asp-98 to Gly-111 is fusion peptide. Asn-154 carries N-linked (GlcNAc...) asparagine; by host glycosylation. Intrachain disulfides connect Cys-186–Cys-290 and Cys-307–Cys-338. Residues Ile-448–Gly-468 form a helical membrane-spanning segment. Residues Leu-469–Ser-479 are Cytoplasmic-facing. The helical transmembrane segment at Phe-480–Ala-496 threads the bilayer.

Homodimer; in the endoplasmic reticulum and Golgi. N-glycosylated.

It is found in the virion membrane. It localises to the host endoplasmic reticulum membrane. In terms of biological role, binds to host cell surface receptor and mediates fusion between viral and cellular membranes. Envelope protein is synthesized in the endoplasmic reticulum in the form of heterodimer with protein prM. They play a role in virion budding in the ER, and the newly formed immature particle is covered with 60 spikes composed of heterodimer between precursor prM and envelope protein E. The virion is transported to the Golgi apparatus where the low pH causes dissociation of PrM-E heterodimers and formation of E homodimers. prM-E cleavage is ineficient, and many virions are only partially matured. These uncleaved prM would play a role in immune evasion. The sequence is that of Genome polyprotein from Bos taurus (Bovine).